An 88-amino-acid chain; its full sequence is Small ribosomal subunit protein uS15c (88 aa).

The protein belongs to the universal ribosomal protein uS15 family. In terms of assembly, part of the 30S ribosomal subunit.

It is found in the plastid. The protein resides in the chloroplast. The protein is Small ribosomal subunit protein uS15c (rps15) of Crucihimalaya wallichii (Rock-cress).